We begin with the raw amino-acid sequence, 364 residues long: Fructose-1,6-bisphosphatase class 1 3 (364 aa).

Mg(2+) contacts are provided by Glu101, Asp123, Leu125, and Asp126. Substrate contacts are provided by residues 126–129 (DGSS) and Asn218. Glu290 serves as a coordination point for Mg(2+).

It belongs to the FBPase class 1 family. As to quaternary structure, homotetramer. Requires Mg(2+) as cofactor.

It is found in the cytoplasm. It carries out the reaction beta-D-fructose 1,6-bisphosphate + H2O = beta-D-fructose 6-phosphate + phosphate. It participates in carbohydrate biosynthesis; gluconeogenesis. This is Fructose-1,6-bisphosphatase class 1 3 from Cupriavidus necator (strain ATCC 17699 / DSM 428 / KCTC 22496 / NCIMB 10442 / H16 / Stanier 337) (Ralstonia eutropha).